The sequence spans 78 residues: Translational regulator CsrA (78 aa).

The protein belongs to the CsrA/RsmA family. In terms of assembly, homodimer; the beta-strands of each monomer intercalate to form a hydrophobic core, while the alpha-helices form wings that extend away from the core.

Its subcellular location is the cytoplasm. In terms of biological role, a translational regulator that binds mRNA to regulate translation initiation and/or mRNA stability. Usually binds in the 5'-UTR at or near the Shine-Dalgarno sequence preventing ribosome-binding, thus repressing translation. Its main target seems to be the major flagellin gene, while its function is anatagonized by FliW. This Borrelia recurrentis (strain A1) protein is Translational regulator CsrA.